The following is a 157-amino-acid chain: SsrA-binding protein (157 aa).

The protein belongs to the SmpB family.

It localises to the cytoplasm. In terms of biological role, required for rescue of stalled ribosomes mediated by trans-translation. Binds to transfer-messenger RNA (tmRNA), required for stable association of tmRNA with ribosomes. tmRNA and SmpB together mimic tRNA shape, replacing the anticodon stem-loop with SmpB. tmRNA is encoded by the ssrA gene; the 2 termini fold to resemble tRNA(Ala) and it encodes a 'tag peptide', a short internal open reading frame. During trans-translation Ala-aminoacylated tmRNA acts like a tRNA, entering the A-site of stalled ribosomes, displacing the stalled mRNA. The ribosome then switches to translate the ORF on the tmRNA; the nascent peptide is terminated with the 'tag peptide' encoded by the tmRNA and targeted for degradation. The ribosome is freed to recommence translation, which seems to be the essential function of trans-translation. The protein is SsrA-binding protein of Chromohalobacter salexigens (strain ATCC BAA-138 / DSM 3043 / CIP 106854 / NCIMB 13768 / 1H11).